Consider the following 524-residue polypeptide: Zinc finger protein GLIS2 (524 aa).

The interval 35–174 (ALHRELGLVD…PKQLVCRWAK (140 aa)) is interaction with CTNND1. 2 disordered regions span residues 39–62 (ELGLVDDSPTPGSPGSPPSGFLLN) and 84–114 (SPPSGLDSPNGSSSLSPERQGNGDLPPVPSA). Residues 71 to 137 (GRFSAAPLVD…SSFQFFLPLG (67 aa)) form a transcription activation region. Low complexity predominate over residues 84-100 (SPPSGLDSPNGSSSLSP). The interval 148–171 (SFLTPPKDKCLSPDLPLPKQLVCR) is transcription repression. The C2H2-type 1 zinc-finger motif lies at 168 to 193 (LVCRWAKCNQLFELLQDLVDHVNDYH). The segment at 202–229 (YCCHWEGCARHGRGFNARYKMLIHIRTH) adopts a C2H2-type 2; atypical zinc-finger fold. 3 consecutive C2H2-type zinc fingers follow at residues 235-257 (HRCPTCSKSFSRLENLKIHNRSH), 263-287 (YVCPYEGCNKRYSNSSDRFKHTRTH), and 293-317 (YYCKMPGCHKRYTDPSSLRKHIKAH). The interval 439–480 (GGKAEGEKGRGSVPTRALGMEGHKTPLERTESSCSRPSPDGL) is disordered. The segment covering 459-469 (EGHKTPLERTE) has biased composition (basic and acidic residues).

It belongs to the GLI C2H2-type zinc-finger protein family. Interacts with CTBP1 and HDAC3. Interacts with CTNNB1. Interacts with SUFU. Interacts with CTNND1. C-terminus cleavage is induced by interaction with CTNND1 and enhanced by Src tyrosine kinase. As to expression, expressed at high levels in kidney and at low levels in heart, lung and placenta. Expressed in colon.

The protein resides in the nucleus speckle. The protein localises to the cytoplasm. Its function is as follows. Can act either as a transcriptional repressor or as a transcriptional activator, depending on the cell context. Acts as a repressor of the Hedgehog signaling pathway. Represses the Hedgehog-dependent expression of Wnt4. Necessary to maintain the differentiated epithelial phenotype in renal cells through the inhibition of SNAI1, which itself induces the epithelial-to-mesenchymal transition. Represses transcriptional activation mediated by CTNNB1 in the Wnt signaling pathway. May act by recruiting the corepressors CTBP1 and HDAC3. May be involved in neuron differentiation. The polypeptide is Zinc finger protein GLIS2 (GLIS2) (Homo sapiens (Human)).